The primary structure comprises 638 residues: Sodium- and chloride-dependent glycine transporter 1 (638 aa).

The tract at residues 1–30 (MAVAHGPVATSSPEQNGAVPSEATKKDQNL) is disordered. Over 1 to 40 (MAVAHGPVATSSPEQNGAVPSEATKKDQNLTRGNWGNQIE) the chain is Cytoplasmic. The next 3 helical transmembrane spans lie at 41–61 (FVLT…FPYL), 68–88 (GAFM…LFFM), and 120–140 (VSTY…YYFF). At 141–217 (SSMTHVLPWA…LSDDIGDFGE (77 aa)) the chain is on the extracellular side. 4 N-linked (GlcNAc...) asparagine glycosylation sites follow: N169, N172, N182, and N188. Helical transmembrane passes span 218 to 238 (VRLP…LCLI), 247 to 267 (VVYF…VRGV), 292 to 312 (VWGD…GGLI), 339 to 359 (SVYA…HLGV), 382 to 402 (LLPI…LLGL), 438 to 458 (VAGF…WLLL), 462 to 482 (YAAS…IMYI), 502 to 522 (LFFQ…ILIF), and 542 to 562 (VAIG…YALF). Residues 563–638 (QLCRTDGDTL…GSSRLQDSRI (76 aa)) are Cytoplasmic-facing. T603 carries the post-translational modification Phosphothreonine. A phosphoserine mark is found at S605 and S630. The interval 627–638 (SNGSSRLQDSRI) is essential for interaction with EXOC1.

It belongs to the sodium:neurotransmitter symporter (SNF) (TC 2.A.22) family. SLC6A9 subfamily. As to quaternary structure, interacts with EXOC1; interaction increases the transporter capacity of SLC6A9 probably by promoting its insertion into the cell membrane. Interacts with EXOC3 and EXOC4. As to expression, found only in the white matter of the CNS. Found in the gray matter of CNS as well as in macrophages and mast cells in peripheral tissues.

The protein localises to the cell membrane. It catalyses the reaction glycine(out) + chloride(out) + 2 Na(+)(out) = glycine(in) + chloride(in) + 2 Na(+)(in). Inhibited by sarcosine. Functionally, sodium- and chloride-dependent glycine transporter. Essential for regulating glycine concentrations at inhibitory glycinergic synapses. The chain is Sodium- and chloride-dependent glycine transporter 1 (Slc6a9) from Rattus norvegicus (Rat).